Reading from the N-terminus, the 542-residue chain is Cytochrome P450 monooxygenase 91 (542 aa).

The first 22 residues, M1–L22, serve as a signal peptide directing secretion. N-linked (GlcNAc...) asparagine glycans are attached at residues N299 and N392. C482 is a binding site for heme.

The protein belongs to the cytochrome P450 family. Heme is required as a cofactor.

Its pathway is secondary metabolite biosynthesis. Its function is as follows. Cytochrome P450 monooxygenase that is able to use dehydroabietic acid as a substrate for oxidation. This Postia placenta (strain ATCC 44394 / Madison 698-R) (Brown rot fungus) protein is Cytochrome P450 monooxygenase 91.